The following is a 121-amino-acid chain: Large ribosomal subunit protein uL18 (121 aa).

Belongs to the universal ribosomal protein uL18 family. In terms of assembly, part of the 50S ribosomal subunit; part of the 5S rRNA/L5/L18/L25 subcomplex. Contacts the 5S and 23S rRNAs.

Functionally, this is one of the proteins that bind and probably mediate the attachment of the 5S RNA into the large ribosomal subunit, where it forms part of the central protuberance. The chain is Large ribosomal subunit protein uL18 from Spiroplasma kunkelii.